A 310-amino-acid chain; its full sequence is Small ribosomal subunit protein uS2 (310 aa).

Positions 249 to 272 (WERDLLEGEKAEKKDDAEAAEKPA) are enriched in basic and acidic residues. The interval 249 to 310 (WERDLLEGEK…EAPAADAEQA (62 aa)) is disordered. The segment covering 273–310 (EAPAAEAPAAEAAEAPAAEAAPAEEPAAEAPAADAEQA) has biased composition (low complexity).

This sequence belongs to the universal ribosomal protein uS2 family.

In Streptomyces coelicolor (strain ATCC BAA-471 / A3(2) / M145), this protein is Small ribosomal subunit protein uS2 (rpsB).